A 221-amino-acid polypeptide reads, in one-letter code: MEYLTHSLIDETEALQIVNKLKAEKSSWQDGKKTAGSHAAEIKSNFQLDKNSKLSIELRDVIVNKIISNPLLKSFTLPSLIHGVMFTQSLVGHSYGSHIDNPYMPSGRSDLSFTLFLNAPEDYEGGELCIQTINKTEKIKLSAGEIIIYPSTQLHSVAEVKDGERHVCVGWIQSYVQNNEDRNFLFGLDAGAKGLLAKHGRSDELDLIFQAYSNILRRLGD.

One can recognise a Fe2OG dioxygenase domain in the interval 80–174 (LIHGVMFTQS…RHVCVGWIQS (95 aa)). Fe cation is bound by residues H98, D100, and H155. R165 is a binding site for 2-oxoglutarate.

Fe(2+) is required as a cofactor. It depends on L-ascorbate as a cofactor.

The sequence is that of PKHD-type hydroxylase NATL1_16191 from Prochlorococcus marinus (strain NATL1A).